A 521-amino-acid chain; its full sequence is Bifunctional purine biosynthesis protein PurH (521 aa).

One can recognise an MGS-like domain in the interval 1 to 145 (MIKQALISVS…KNHKDVIVIC (145 aa)).

The protein belongs to the PurH family.

The catalysed reaction is (6R)-10-formyltetrahydrofolate + 5-amino-1-(5-phospho-beta-D-ribosyl)imidazole-4-carboxamide = 5-formamido-1-(5-phospho-D-ribosyl)imidazole-4-carboxamide + (6S)-5,6,7,8-tetrahydrofolate. It catalyses the reaction IMP + H2O = 5-formamido-1-(5-phospho-D-ribosyl)imidazole-4-carboxamide. It functions in the pathway purine metabolism; IMP biosynthesis via de novo pathway; 5-formamido-1-(5-phospho-D-ribosyl)imidazole-4-carboxamide from 5-amino-1-(5-phospho-D-ribosyl)imidazole-4-carboxamide (10-formyl THF route): step 1/1. The protein operates within purine metabolism; IMP biosynthesis via de novo pathway; IMP from 5-formamido-1-(5-phospho-D-ribosyl)imidazole-4-carboxamide: step 1/1. The chain is Bifunctional purine biosynthesis protein PurH from Herminiimonas arsenicoxydans.